The following is a 257-amino-acid chain: LexA repressor (257 aa).

A DNA-binding region (H-T-H motif) is located at residues 64–84; it reads FREIGEAAGLKSPSSVKHQLQ. Catalysis depends on for autocatalytic cleavage activity residues S181 and K218.

The protein belongs to the peptidase S24 family. As to quaternary structure, homodimer.

The enzyme catalyses Hydrolysis of Ala-|-Gly bond in repressor LexA.. Its function is as follows. Represses a number of genes involved in the response to DNA damage (SOS response), including recA and lexA. In the presence of single-stranded DNA, RecA interacts with LexA causing an autocatalytic cleavage which disrupts the DNA-binding part of LexA, leading to derepression of the SOS regulon and eventually DNA repair. The chain is LexA repressor from Bifidobacterium adolescentis (strain ATCC 15703 / DSM 20083 / NCTC 11814 / E194a).